The chain runs to 1828 residues: InaD-like protein (1828 aa).

Positions 5-65 (PAPDKLQVLQ…SIKQLKGQLS (61 aa)) constitute an L27 domain. PDZ domains follow at residues 134 to 221 (YIDI…AREP), 248 to 328 (DVEL…ARDP), and 365 to 453 (GVEL…VRRK). A phosphoserine mark is found at S459 and S522. Positions 553-639 (DAELQKYSKL…PFTLVCCRRL (87 aa)) constitute a PDZ 4 domain. Residue S645 is modified to Phosphoserine. PDZ domains follow at residues 686–758 (IVEL…EVLK) and 1070–1162 (IVEI…QSLS). The interval 1168–1220 (IPSVHNKANKIANNQDQNTEEKKEKRQGTPPPPMKLPPPYKAPSDDSDENEEE) is disordered. Positions 1196–1208 (TPPPPMKLPPPYK) are enriched in pro residues. S1211 carries the phosphoserine modification. The PDZ 7 domain occupies 1241–1324 (IIELEKDKNG…KVKLVFIRNE (84 aa)). Positions 1333–1362 (APFPVPSSSPSSLEDQSGTEPVSSEEDGSL) are disordered. The segment covering 1345–1354 (LEDQSGTEPV) has biased composition (polar residues). PDZ domains are found at residues 1464–1547 (IIEI…YRDE) and 1560–1642 (PVDL…GRLR). Position 1535 is a phosphothreonine (T1535). Polar residues predominate over residues 1645–1668 (SWTSSRKTSQNSQGSQHSTHSSFH). A disordered region spans residues 1645–1669 (SWTSSRKTSQNSQGSQHSTHSSFHP). One can recognise a PDZ 10 domain in the interval 1703–1789 (TVEIIRELSD…RIILQVVADT (87 aa)). The disordered stretch occupies residues 1805–1828 (YHLGSPTAEHHPEDTEEPLQMTAG).

In terms of assembly, forms a ternary complex with PALS1 and CRB1. Component of a complex whose core is composed of ARHGAP17, AMOT, PALS1, INADL/PATJ and PARD3/PAR3. Forms a heterotrimeric complex composed of MMP5, LIN7B and PATJ; the N-terminal L27 domain of PALS1 interacts with the L27 domain of PATJ and the C-terminal L27 domain of PALS1 interacts with the L27 domain of LIN7B. Component of a complex composed of CRB3, PALS1 and PATJ. As part of the Crumbs complex; interacts with WWP1, the interaction is enhanced by AMOTL2 and facilitates WWP1 localization to the plasma membrane. The Crumbs complex promotes monoubiquitination of AMOTL2 by WWP1, which activates the Hippo signaling pathway. Interacts (via N-terminus) with PALS1/PALS (via PDZ domain). Interacts with TJP3/ZO-3 and CLDN1/claudin-1. Interacts with ASIC3, KCNJ10, KCNJ15, GRIN2A, GRIN2B, GRIN2C, GRIN2D, NLGN2, and HTR2A. Interacts with MPP7. Directly interacts with HTR4. Interacts (via PDZ domain 8) with WWC1 (via the ADDV motif). Interacts with SLC6A4. Interacts (via C-terminus) with ARHGEF18. Interacts with NPHP1. Interacts with PARD3/PAR3. Interacts (via PDZ1-6 domains) with TJP1/ZO1; the interaction is required for attachment and extension of TJP1/ZO1 condensates along the apical cell interface.

Its subcellular location is the cell junction. The protein localises to the tight junction. It is found in the apical cell membrane. It localises to the cytoplasm. The protein resides in the perinuclear region. In terms of biological role, scaffolding protein that facilitates the localization of proteins to the cell membrane. Required for the correct formation of tight junctions and epithelial apico-basal polarity. Acts (via its L27 domain) as an apical connector and elongation factor for multistranded TJP1/ZO1 condensates that form a tight junction belt, thereby required for the formation of the tight junction-mediated cell barrier. Positively regulates epithelial cell microtubule elongation and cell migration, possibly via facilitating localization of PRKCI/aPKC and PAR3D/PAR3 at the leading edge of migrating cells. Plays a role in the correct reorientation of the microtubule-organizing center during epithelial migration. May regulate the surface expression and/or function of ASIC3 in sensory neurons. May recruit ARHGEF18 to apical cell-cell boundaries. In Canis lupus familiaris (Dog), this protein is InaD-like protein.